Consider the following 323-residue polypeptide: tRNA U34 carboxymethyltransferase (323 aa).

Residues K91, W105, K110, G130, 152–154 (DPS), 181–182 (IE), M196, Y200, and R315 each bind carboxy-S-adenosyl-L-methionine.

This sequence belongs to the class I-like SAM-binding methyltransferase superfamily. CmoB family. As to quaternary structure, homotetramer.

It catalyses the reaction carboxy-S-adenosyl-L-methionine + 5-hydroxyuridine(34) in tRNA = 5-carboxymethoxyuridine(34) in tRNA + S-adenosyl-L-homocysteine + H(+). Catalyzes carboxymethyl transfer from carboxy-S-adenosyl-L-methionine (Cx-SAM) to 5-hydroxyuridine (ho5U) to form 5-carboxymethoxyuridine (cmo5U) at position 34 in tRNAs. The polypeptide is tRNA U34 carboxymethyltransferase (Vibrio vulnificus (strain CMCP6)).